Consider the following 52-residue polypeptide: Gastrin/cholecystokinin-like peptide (52 aa).

This sequence belongs to the gastrin/cholecystokinin family.

The protein localises to the secreted. Functionally, may control digestion processes. This Trachemys scripta (Red-eared slider turtle) protein is Gastrin/cholecystokinin-like peptide.